The chain runs to 855 residues: DNA mismatch repair protein MutS (855 aa).

An ATP-binding site is contributed by 616–623; sequence GPNMGGKS.

This sequence belongs to the DNA mismatch repair MutS family.

In terms of biological role, this protein is involved in the repair of mismatches in DNA. It is possible that it carries out the mismatch recognition step. This protein has a weak ATPase activity. The polypeptide is DNA mismatch repair protein MutS (Salmonella dublin (strain CT_02021853)).